A 265-amino-acid polypeptide reads, in one-letter code: Phosphonates import ATP-binding protein PhnC (265 aa).

Residues 3 to 247 (LRLKQAFLHH…MLDTLYANEQ (245 aa)) form the ABC transporter domain. ATP is bound at residue 36-43 (GPSGAGKS).

The protein belongs to the ABC transporter superfamily. Phosphonates importer (TC 3.A.1.9.1) family. In terms of assembly, the complex is composed of two ATP-binding proteins (PhnC), two transmembrane proteins (PhnE) and a solute-binding protein (PhnD).

It localises to the cell inner membrane. It catalyses the reaction phosphonate(out) + ATP + H2O = phosphonate(in) + ADP + phosphate + H(+). Its function is as follows. Part of the ABC transporter complex PhnCDE involved in phosphonates import. Responsible for energy coupling to the transport system. This is Phosphonates import ATP-binding protein PhnC from Pseudomonas fluorescens (strain Pf0-1).